The sequence spans 55 residues: Serine protease inhibitor Kazal-type 1 (55 aa).

The Kazal-like domain occupies Q2–C55. Cystine bridges form between C8–C37, C15–C34, and C23–C55.

The protein resides in the secreted. Functionally, serine protease inhibitor which exhibits anti-trypsin activity. In the pancreas, protects against trypsin-catalyzed premature activation of zymogens. Its function is as follows. In the male reproductive tract, binds to sperm heads where it modulates sperm capacitance by inhibiting calcium uptake and nitrogen oxide (NO) production. The polypeptide is Serine protease inhibitor Kazal-type 1 (SPINK1) (Monodelphis domestica (Gray short-tailed opossum)).